A 1465-amino-acid polypeptide reads, in one-letter code: Transcriptional elongation regulator MINIYO (1465 aa).

Disordered stretches follow at residues 27–85 (KGIS…AEER), 186–211 (LNAS…ESDI), and 1113–1135 (TIHE…SSTI).

Belongs to the RPAP1 family. In terms of assembly, interacts with HAG3, NRPB3 and NRPB10L. In terms of tissue distribution, expressed in root and shoot apices and in leaf and flower primordia. Detected in the endosperm, embryo, meristems and in organ primordia, but not in mature cells. Found exclusively in the vascular bundles in mature leaves.

The protein localises to the cytoplasm. It is found in the nucleus. Its function is as follows. Positive regulator of transcriptional elongation that is essential for cells to initiate differentiation. Interacts with RNA polymerase II and the Elongator complex and is required to sustain global levels of transcriptional elongation activity, specifically in differentiating tissues. The polypeptide is Transcriptional elongation regulator MINIYO (Arabidopsis thaliana (Mouse-ear cress)).